Here is a 178-residue protein sequence, read N- to C-terminus: Protein GrpE (178 aa).

This sequence belongs to the GrpE family. As to quaternary structure, homodimer.

The protein localises to the cytoplasm. In terms of biological role, participates actively in the response to hyperosmotic and heat shock by preventing the aggregation of stress-denatured proteins, in association with DnaK and GrpE. It is the nucleotide exchange factor for DnaK and may function as a thermosensor. Unfolded proteins bind initially to DnaJ; upon interaction with the DnaJ-bound protein, DnaK hydrolyzes its bound ATP, resulting in the formation of a stable complex. GrpE releases ADP from DnaK; ATP binding to DnaK triggers the release of the substrate protein, thus completing the reaction cycle. Several rounds of ATP-dependent interactions between DnaJ, DnaK and GrpE are required for fully efficient folding. The protein is Protein GrpE of Rickettsia akari (strain Hartford).